We begin with the raw amino-acid sequence, 298 residues long: tRNA pseudouridine synthase A (298 aa).

Aspartate 56 functions as the Nucleophile in the catalytic mechanism. Residue tyrosine 125 participates in substrate binding.

It belongs to the tRNA pseudouridine synthase TruA family. In terms of assembly, homodimer.

The catalysed reaction is uridine(38/39/40) in tRNA = pseudouridine(38/39/40) in tRNA. Functionally, formation of pseudouridine at positions 38, 39 and 40 in the anticodon stem and loop of transfer RNAs. This Bifidobacterium animalis subsp. lactis (strain AD011) protein is tRNA pseudouridine synthase A.